The following is a 459-amino-acid chain: Trigger factor (459 aa).

Residues 166-245 form the PPIase FKBP-type domain; it reads GDFANIDLTA…VNSVKAEELP (80 aa).

Belongs to the FKBP-type PPIase family. Tig subfamily.

The protein localises to the cytoplasm. The catalysed reaction is [protein]-peptidylproline (omega=180) = [protein]-peptidylproline (omega=0). Involved in protein export. Acts as a chaperone by maintaining the newly synthesized protein in an open conformation. Functions as a peptidyl-prolyl cis-trans isomerase. In Bifidobacterium longum (strain DJO10A), this protein is Trigger factor.